Consider the following 115-residue polypeptide: Large ribosomal subunit protein uL18 (115 aa).

Belongs to the universal ribosomal protein uL18 family. In terms of assembly, part of the 50S ribosomal subunit; part of the 5S rRNA/L5/L18/L25 subcomplex. Contacts the 5S and 23S rRNAs.

Functionally, this is one of the proteins that bind and probably mediate the attachment of the 5S RNA into the large ribosomal subunit, where it forms part of the central protuberance. The chain is Large ribosomal subunit protein uL18 from Marinobacter nauticus (strain ATCC 700491 / DSM 11845 / VT8) (Marinobacter aquaeolei).